We begin with the raw amino-acid sequence, 1049 residues long: Dyslexia-associated protein KIAA0319-like protein (1049 aa).

The Cytoplasmic portion of the chain corresponds to 1-29 (MEKRLGVKPNPASWILSGYYWQTSAKWLR). Residues 30–50 (SLYLFYTCFCFSVLWLSTDAS) traverse the membrane as a helical segment. The region spanning 49-127 (ASESRCQQGK…AFRTHSSNSM (79 aa)) is the MANSC domain. The Extracellular portion of the chain corresponds to 51-932 (ESRCQQGKTQ…DSNCEWSVLY (882 aa)). Asparagine 247, asparagine 395, asparagine 472, asparagine 487, and asparagine 525 each carry an N-linked (GlcNAc...) asparagine glycan. PKD domains follow at residues 312–401 (SAGE…VKPE), 409–498 (IAIV…VNKA), 504–594 (VANA…VQPE), 600–688 (QADA…VKEE), and 694–785 (IAKI…VKPD). Residues 933–953 (VIIATFVIVVALGILSWTVIC) traverse the membrane as a helical segment. The Cytoplasmic portion of the chain corresponds to 954–1049 (CCKRQKGKPK…KARSPREEIL (96 aa)). At threonine 974 the chain carries Phosphothreonine. Phosphoserine is present on residues serine 978, serine 1009, and serine 1031. Positions 1022 to 1049 (GKLLHGQNGSVPNGQTPLKARSPREEIL) are disordered. Residues 1028–1037 (QNGSVPNGQT) are compositionally biased toward polar residues. Threonine 1037 bears the Phosphothreonine mark.

Interacts with RTN4R. In terms of assembly, (Microbial infection) Interacts with AAV-2 VP1. In terms of processing, N-glycosylated. In terms of tissue distribution, expressed in cortical neurons in the brain cortex (at protein level).

Its subcellular location is the cytoplasmic granule membrane. It is found in the golgi apparatus membrane. The protein resides in the golgi apparatus. The protein localises to the trans-Golgi network membrane. It localises to the cell membrane. Functionally, possible role in axon guidance through interaction with RTN4R. (Microbial infection) Acts as a receptor for adeno-associated virus and is involved in adeno-associated virus infection through endocytosis system. This Homo sapiens (Human) protein is Dyslexia-associated protein KIAA0319-like protein.